A 342-amino-acid chain; its full sequence is Nicotinate-nucleotide--dimethylbenzimidazole phosphoribosyltransferase (342 aa).

Glutamate 311 acts as the Proton acceptor in catalysis.

The protein belongs to the CobT family.

The catalysed reaction is 5,6-dimethylbenzimidazole + nicotinate beta-D-ribonucleotide = alpha-ribazole 5'-phosphate + nicotinate + H(+). It participates in nucleoside biosynthesis; alpha-ribazole biosynthesis; alpha-ribazole from 5,6-dimethylbenzimidazole: step 1/2. Functionally, catalyzes the synthesis of alpha-ribazole-5'-phosphate from nicotinate mononucleotide (NAMN) and 5,6-dimethylbenzimidazole (DMB). The sequence is that of Nicotinate-nucleotide--dimethylbenzimidazole phosphoribosyltransferase from Shewanella piezotolerans (strain WP3 / JCM 13877).